The following is a 263-amino-acid chain: Putative hydro-lyase GK2103 (263 aa).

It belongs to the D-glutamate cyclase family.

The chain is Putative hydro-lyase GK2103 from Geobacillus kaustophilus (strain HTA426).